Reading from the N-terminus, the 412-residue chain is Glutamate-pyruvate aminotransferase AlaC (412 aa).

Lys244 bears the N6-(pyridoxal phosphate)lysine mark.

Belongs to the class-I pyridoxal-phosphate-dependent aminotransferase family. In terms of assembly, homodimer. Pyridoxal 5'-phosphate serves as cofactor.

The protein localises to the cytoplasm. It carries out the reaction L-alanine + 2-oxoglutarate = pyruvate + L-glutamate. The protein operates within amino-acid biosynthesis; L-alanine biosynthesis. Its function is as follows. Involved in the biosynthesis of alanine. Catalyzes the transamination of pyruvate by glutamate, leading to the formation of L-alanine and 2-oxoglutarate. Is also able to catalyze the reverse reaction. The sequence is that of Glutamate-pyruvate aminotransferase AlaC from Escherichia coli (strain K12).